The sequence spans 619 residues: Phosphomethylpyrimidine synthase (619 aa).

The span at 1-11 (MHEQRSLTMNA) shows a compositional bias: polar residues. The segment at 1-25 (MHEQRSLTMNALTPAVSTGPLPASR) is disordered. Substrate-binding positions include asparagine 220, methionine 249, tyrosine 278, histidine 314, 334–336 (SRG), 375–378 (DGLR), and glutamate 414. Zn(2+) is bound at residue histidine 418. Residue tyrosine 441 coordinates substrate. Histidine 482 contacts Zn(2+). Positions 562, 565, and 570 each coordinate [4Fe-4S] cluster.

The protein belongs to the ThiC family. In terms of assembly, homodimer. Requires [4Fe-4S] cluster as cofactor.

The catalysed reaction is 5-amino-1-(5-phospho-beta-D-ribosyl)imidazole + S-adenosyl-L-methionine = 4-amino-2-methyl-5-(phosphooxymethyl)pyrimidine + CO + 5'-deoxyadenosine + formate + L-methionine + 3 H(+). It functions in the pathway cofactor biosynthesis; thiamine diphosphate biosynthesis. Functionally, catalyzes the synthesis of the hydroxymethylpyrimidine phosphate (HMP-P) moiety of thiamine from aminoimidazole ribotide (AIR) in a radical S-adenosyl-L-methionine (SAM)-dependent reaction. This Mesorhizobium japonicum (strain LMG 29417 / CECT 9101 / MAFF 303099) (Mesorhizobium loti (strain MAFF 303099)) protein is Phosphomethylpyrimidine synthase.